Consider the following 257-residue polypeptide: Adenylate kinase (257 aa).

52–57 (GAGKGT) provides a ligand contact to ATP. An NMP region spans residues 72–101 (ATGDMLRSQVAKKTELGKEAKKIMDQGGLV). Residues T73, R78, 99-101 (GLV), 128-131 (GFPR), and Q135 contribute to the AMP site. The tract at residues 169-206 (GRLVHPASGRSYHKIFNPPKNDMKDDVTGEPLIQRSDD) is LID. ATP-binding positions include R170 and 179–180 (SY). R203 and R214 together coordinate AMP. Q242 contributes to the ATP binding site.

Belongs to the adenylate kinase family. AK2 subfamily. Monomer.

The protein localises to the cytoplasm. It is found in the cytosol. It localises to the mitochondrion intermembrane space. It carries out the reaction AMP + ATP = 2 ADP. Its function is as follows. Catalyzes the reversible transfer of the terminal phosphate group between ATP and AMP. Plays an important role in cellular energy homeostasis and in adenine nucleotide metabolism. Adenylate kinase activity is critical for regulation of the phosphate utilization and the AMP de novo biosynthesis pathways. The sequence is that of Adenylate kinase (adk1) from Neosartorya fischeri (strain ATCC 1020 / DSM 3700 / CBS 544.65 / FGSC A1164 / JCM 1740 / NRRL 181 / WB 181) (Aspergillus fischerianus).